A 35-amino-acid chain; its full sequence is Tamulustoxin (35 aa).

Intrachain disulfides connect Cys-2-Cys-22, Cys-7-Cys-31, and Cys-11-Cys-33.

Expressed by the venom gland.

It localises to the secreted. Functionally, blocks Kv1.6/KCNA6 potassium channels. The protein is Tamulustoxin of Hottentotta tamulus (Eastern Indian scorpion).